The chain runs to 198 residues: Ras-like protein 2 (198 aa).

GTP is bound at residue 18–25 (GDGGVGKS). The Effector region signature appears at 40 to 48 (YDPTIEDSY). Residues 65–69 (DTAGQ) and 124–127 (NKCD) each bind GTP. Cysteine methyl ester is present on C195. C195 carries the S-farnesyl cysteine lipid modification. Residues 196–198 (IVM) constitute a propeptide, removed in mature form.

It belongs to the small GTPase superfamily. Ras family.

The protein resides in the cell membrane. The catalysed reaction is GTP + H2O = GDP + phosphate + H(+). Its activity is regulated as follows. Alternates between an inactive form bound to GDP and an active form bound to GTP. Activated by a guanine nucleotide-exchange factor (GEF) and inactivated by a GTPase-activating protein (GAP). In Mucor circinelloides f. lusitanicus (Mucor racemosus var. lusitanicus), this protein is Ras-like protein 2 (RAS2).